We begin with the raw amino-acid sequence, 448 residues long: Solute carrier family 52, riboflavin transporter, member 1 (448 aa).

The next 5 helical transmembrane spans lie at 14-34 (LLVALFGMGSWAAVNGIWVEL), 47-67 (LPSYLSVVVALGNLGLLVVTL), 79-99 (VPIQVVQVLSVVGTALLAPLW), 124-144 (ACCTSNVTFLPFLSHLPPPFL), and 147-167 (FFLGQGLSALLPCVLALVQGV). Residue Asn178 is glycosylated (N-linked (GlcNAc...) asparagine). The chain crosses the membrane as a helical span at residues 191–211 (FPASTFFWALTALLVTSAAAF). The disordered stretch occupies residues 225–267 (TTGGSGPELQLGSPGAEEEEKEEEEALPLQEPPSQAAGTIPGP). Positions 240–250 (AEEEEKEEEEA) are enriched in acidic residues. Transmembrane regions (helical) follow at residues 280 to 300 (AFLLGLMAFTSAVTNGVLPSV), 315 to 335 (LAVVLGSAANPLACFLAMGVL), 342 to 362 (LVGLSLLGMLFGAYLMALAIL), 369 to 389 (VGTTAGVVLVVLSWVLCLCVF), and 407 to 427 (ALLAAGVAIQVGSLLGAGAMF).

It belongs to the riboflavin transporter family. As to expression, widely expressed. Highly expressed in the testis, placenta and small intestine. Expressed at lower level in other tissues.

The protein resides in the cell membrane. The catalysed reaction is riboflavin(in) = riboflavin(out). The activity is strongly inhibited by riboflavin analogs, such as lumiflavin. Weakly inhibited by flavin adenine dinucleotide (FAD). Its function is as follows. Plasma membrane transporter mediating the uptake by cells of the water soluble vitamin B2/riboflavin that plays a key role in biochemical oxidation-reduction reactions of the carbohydrate, lipid, and amino acid metabolism. Humans are unable to synthesize vitamin B2/riboflavin and must obtain it via intestinal absorption. In terms of biological role, (Microbial infection) May function as a cell receptor to retroviral envelopes similar to the porcine endogenous retrovirus (PERV-A). This chain is Solute carrier family 52, riboflavin transporter, member 1, found in Homo sapiens (Human).